The following is a 211-amino-acid chain: RING finger protein narya (211 aa).

An RING-type zinc finger spans residues C6–C47. Positions R149–L211 are disordered. Positions S153–E165 are enriched in basic and acidic residues. Positions S172 to D184 are enriched in low complexity.

As to quaternary structure, may interact with itself, with nenya and vilya through its RING-type zinc finger. In terms of tissue distribution, expressed in nurse cell and pro-oocytes (at protein level).

Its subcellular location is the chromosome. Its function is as follows. Required for the formation of DNA double-strand breaks (DSBs) together with nenya and vilya during the meiotic recombination process. Plays a role in DSBs processing into crossovers. Plays a redundant role with nenya in chromosome segregation during female meiosis. This is RING finger protein narya from Drosophila melanogaster (Fruit fly).